Reading from the N-terminus, the 314-residue chain is MQRIRIIDSHTGGEPTRLVIGGFPDLGQGDMAERRRLLGERHDAWRAACILEPRGSDVLVGALLCAPVDPEACAGVIFFNNSGYLGMCGHGTIGLVASLAHLGRIGPGVHRIETPVGEVEATLHEDGSVSVRNVPAYRYRRQVSVEVPGIGRVSGDIAWGGNWFFLVAGHGQRLAGDNLDALTAYTVAVQQALDDQDIRGEDGGAIDHIELFADDPHADSRNFVLCPGKAYDRSPCGTGTSAKLACLAADGKLLPGQPWRQASVIGSQFEGRYEWLDGQPGGPIVPTIRGRAHVSAEATLLLADDDPFAWGIRR.

Catalysis depends on C88, which acts as the Proton acceptor. Residues 89-90, H208, and D232 contribute to the substrate site; that span reads GH. C236 serves as the catalytic Proton donor. 237–238 serves as a coordination point for substrate; it reads GT.

Belongs to the proline racemase family. Homodimer.

The enzyme catalyses trans-4-hydroxy-L-proline = cis-4-hydroxy-D-proline. Its activity is regulated as follows. Inhibited by iodoacetate, iodoacetamide and by high amounts (10 mM) of pyrrole-2-carboxylate (PYC). Not inhibited by PYC at 1 mM. Functionally, allows intracellular utilization of 4-hydroxyproline, one of the major constituents of host collagen, by converting trans-4-hydroxy-L-proline (t4LHyp) to cis-4-hydroxy-D-proline (c4DHyp), which can be further metabolized by intracellular 4-hydroxy-D-proline oxidases. Strong B-cell mitogen. Plays an important role in the regulation of intra- and extracellular amino acid pools, allowing the bacterium to profit from host precursors and enzymatic pathways. Cannot use L-proline, trans-3-hydroxy-L-proline (t3LHyp) and pyrrolidone-5-carboxylate (P5C) as substrate. The polypeptide is 4-hydroxyproline 2-epimerase (Pseudomonas aeruginosa (strain ATCC 15692 / DSM 22644 / CIP 104116 / JCM 14847 / LMG 12228 / 1C / PRS 101 / PAO1)).